Consider the following 117-residue polypeptide: Large ribosomal subunit protein bL20 (117 aa).

This sequence belongs to the bacterial ribosomal protein bL20 family.

In terms of biological role, binds directly to 23S ribosomal RNA and is necessary for the in vitro assembly process of the 50S ribosomal subunit. It is not involved in the protein synthesizing functions of that subunit. The chain is Large ribosomal subunit protein bL20 from Neorickettsia sennetsu (strain ATCC VR-367 / Miyayama) (Ehrlichia sennetsu).